The following is a 158-amino-acid chain: uncharacterized protein (158 aa).

Positions 3 to 130 (YLQRVTNCVL…DGHILDFMMK (128 aa)) constitute a Nudix hydrolase domain. Residues 34–55 (GKMESGESVRDSVIREYREETG) carry the Nudix box motif. Glu49 and Glu53 together coordinate Mg(2+).

This sequence belongs to the Nudix hydrolase family. It depends on Mg(2+) as a cofactor.

This is an uncharacterized protein from Bacillus subtilis (strain 168).